A 262-amino-acid chain; its full sequence is Taurine import ATP-binding protein TauB (262 aa).

In terms of domain architecture, ABC transporter spans 4–234 (VDHASVFFAA…RFAETGDARS (231 aa)). 39 to 46 (GASGCGKS) lines the ATP pocket.

The protein belongs to the ABC transporter superfamily. Taurine importer (TC 3.A.1.17.1) family. The complex is composed of two ATP-binding proteins (TauB), two transmembrane proteins (TauC) and a solute-binding protein (TauA).

It localises to the cell inner membrane. It catalyses the reaction taurine(out) + ATP + H2O = taurine(in) + ADP + phosphate + H(+). Its function is as follows. Part of the ABC transporter complex TauABC involved in taurine import. Responsible for energy coupling to the transport system. This is Taurine import ATP-binding protein TauB from Rhizobium johnstonii (strain DSM 114642 / LMG 32736 / 3841) (Rhizobium leguminosarum bv. viciae).